Consider the following 208-residue polypeptide: LexA repressor (208 aa).

Positions 29–49 (VREICGAVGLSSTSTVHGHIN) form a DNA-binding region, H-T-H motif. Residues S129 and K167 each act as for autocatalytic cleavage activity in the active site.

This sequence belongs to the peptidase S24 family. In terms of assembly, homodimer.

The catalysed reaction is Hydrolysis of Ala-|-Gly bond in repressor LexA.. Its function is as follows. Represses a number of genes involved in the response to DNA damage (SOS response), including recA and lexA. In the presence of single-stranded DNA, RecA interacts with LexA causing an autocatalytic cleavage which disrupts the DNA-binding part of LexA, leading to derepression of the SOS regulon and eventually DNA repair. This chain is LexA repressor, found in Limosilactobacillus fermentum (strain NBRC 3956 / LMG 18251) (Lactobacillus fermentum).